We begin with the raw amino-acid sequence, 243 residues long: Transcription factor TCP6 (243 aa).

The disordered stretch occupies residues 1 to 55; that stretch reads MVMEPKKNQNLPSFLNPSRQNQDNDKKRKQTEVKGFDIVVGEKRKKKENEEEDQE. A compositionally biased stretch (polar residues) spans 8 to 21; sequence NQNLPSFLNPSRQN. The segment covering 22–35 has biased composition (basic and acidic residues); sequence QDNDKKRKQTEVKG. Residues 42 to 66 are a coiled coil; that stretch reads EKRKKKENEEEDQEIQILYEKEKKK. The region spanning 68–122 is the TCP domain; that stretch reads NKDRHLKVEGRGRRVRLPPLCAARIYQLTKELGHKSDGETLEWLLQHAEPSILSA.

In terms of assembly, interacts with SPL.

The protein localises to the nucleus. In Arabidopsis thaliana (Mouse-ear cress), this protein is Transcription factor TCP6 (TCP6).